A 118-amino-acid polypeptide reads, in one-letter code: Late cornified envelope protein 1C (118 aa).

Over residues 1 to 10 the composition is skewed to low complexity; sequence MSCQQSQQQC. 2 disordered regions span residues 1-23 and 87-118; these read MSCQ…CPPK and CHRP…GGCC. A compositionally biased stretch (pro residues) spans 11–23; sequence QPPPKCTPKCPPK. Over residues 90-103 the composition is skewed to low complexity; the sequence is PQSSGCCSQPSGGS. A compositionally biased stretch (gly residues) spans 104 to 118; that stretch reads SCCGGGSGQHSGGCC.

The protein belongs to the LCE family. Interacts with CYSRT1. In terms of tissue distribution, skin-specific. Expression was readily detected in adult trunk skin, adult arm skin, fetal skin, penal skin, vulva, esophagus and tongue. Not expressed in the cervix, rectum, lung, colon, or placenta.

Functionally, precursors of the cornified envelope of the stratum corneum. This Homo sapiens (Human) protein is Late cornified envelope protein 1C (LCE1C).